We begin with the raw amino-acid sequence, 470 residues long: ATP synthase subunit beta (470 aa).

Position 158–165 (158–165) interacts with ATP; it reads GGAGVGKT.

Belongs to the ATPase alpha/beta chains family. As to quaternary structure, F-type ATPases have 2 components, CF(1) - the catalytic core - and CF(0) - the membrane proton channel. CF(1) has five subunits: alpha(3), beta(3), gamma(1), delta(1), epsilon(1). CF(0) has three main subunits: a(1), b(2) and c(9-12). The alpha and beta chains form an alternating ring which encloses part of the gamma chain. CF(1) is attached to CF(0) by a central stalk formed by the gamma and epsilon chains, while a peripheral stalk is formed by the delta and b chains.

It localises to the cell membrane. It catalyses the reaction ATP + H2O + 4 H(+)(in) = ADP + phosphate + 5 H(+)(out). Produces ATP from ADP in the presence of a proton gradient across the membrane. The catalytic sites are hosted primarily by the beta subunits. This Halalkalibacterium halodurans (strain ATCC BAA-125 / DSM 18197 / FERM 7344 / JCM 9153 / C-125) (Bacillus halodurans) protein is ATP synthase subunit beta.